A 428-amino-acid chain; its full sequence is MAKEKPHVNIVFIGHVDHGKSTTIGRLLFDTANIPENIIKKFEEMGEKGKSFKFAWVMDRLKEERERGITIDVAHTKFETPHRYITIIDAPGHRDFVKNMITGASQADAAVLVVAATDGVMPQTKEHAFLARTLGIGHIIVAINKMDMVDYDEKKFKQVSEQVKKLLMMLGYKDFPIIPISAWEGDNVVKKSDKMPWYNGPTLIEALDQIPEPPKPTDKPLRIPIQDVYSIKGVGTVPVGRVETGVLRVGDVVIFEPASTIFHKPIQGEVKSIEMHHEPMQEALPGDNIGFNVRGVGKNDIKRGDVAGHTNNPPTVVRPKDTFKAQIIVLNHPTAITIGYTPVLHAHTLQVAVRFEQLLAKLDPRTGNVVEENPQFIKTGDSAIVVLRPTKPMVIEPVKEIPQMGRFAIRDMGQTVAAGMVISIQKAE.

A tr-type G domain is found at 5–215 (KPHVNIVFIG…ALDQIPEPPK (211 aa)). The G1 stretch occupies residues 14–21 (GHVDHGKS). Residue 14–21 (GHVDHGKS) coordinates GTP. Ser21 contributes to the Mg(2+) binding site. Positions 68–72 (GITID) are G2. Positions 89–92 (DAPG) are G3. GTP is bound by residues 89-93 (DAPGH) and 144-147 (NKMD). Residues 144 to 147 (NKMD) form a G4 region. A G5 region spans residues 181 to 183 (SAW).

This sequence belongs to the TRAFAC class translation factor GTPase superfamily. Classic translation factor GTPase family. EF-Tu/EF-1A subfamily.

It localises to the cytoplasm. The catalysed reaction is GTP + H2O = GDP + phosphate + H(+). Functionally, GTP hydrolase that promotes the GTP-dependent binding of aminoacyl-tRNA to the A-site of ribosomes during protein biosynthesis. The sequence is that of Elongation factor 1-alpha from Thermococcus onnurineus (strain NA1).